The following is a 308-amino-acid chain: 3'(2'),5'-bisphosphate nucleotidase 1 (308 aa).

A2 carries the N-acetylalanine modification. The active-site Proton acceptor is D51. Mg(2+) is bound by residues E74, D117, L119, and D120. Catalysis depends on T122, which acts as the Proton acceptor. T122 carries the post-translational modification Phosphothreonine. Residues T195, H198, G220, and K224 each contribute to the AMP site. S240 bears the Phosphoserine mark. N6-succinyllysine is present on K244. D247 lines the Mg(2+) pocket.

It belongs to the inositol monophosphatase superfamily. The cofactor is Mg(2+). As to expression, widely expressed. Highly expressed in kidney.

The enzyme catalyses adenosine 3',5'-bisphosphate + H2O = AMP + phosphate. It carries out the reaction adenosine 2',5'-bisphosphate + H2O = AMP + phosphate. The catalysed reaction is 3'-phosphoadenylyl sulfate + H2O = adenosine 5'-phosphosulfate + phosphate. It catalyses the reaction 1D-myo-inositol 1,4-bisphosphate + H2O = 1D-myo-inositol 4-phosphate + phosphate. The enzyme catalyses 1D-myo-inositol 1,3,4-trisphosphate + H2O = 1D-myo-inositol 3,4-bisphosphate + phosphate. Its activity is regulated as follows. Uncompetitively inhibited by Li(+) (IC(50)=157 uM). PAP hydrolysis is competitively inhibited by PAPS (IC(50)=0.7 uM) and by inositol 1,4-bisphosphate (IC(50)=15 uM). Functionally, phosphatase that converts 3'(2')-phosphoadenosine 5'-phosphate (PAP) to AMP and adenosine 3'-phosphate 5'-phosphosulfate (PAPS) to adenosine 5'-phosphosulfate (APS). Is also able to hydrolyze inositol 1,4-bisphosphate (Ins(1,4)P2) and inositol 1,3,4-trisphosphate (Ins(1,3,4)P3), and is not active on Ins(1)P, Ins(4)P, Ins(3,4)P2, Ins(1,4,5)P3, Ins(1,3,4,5)P4, Ins(1,3,4,5,6)P5 or InsP6. Probably prevents the toxic accumulation of PAP, a compound which inhibits a variety of proteins, including PAPS-utilizing enzymes such as sulfotransferases, and RNA processing enzymes. Could also play a role in inositol recycling and phosphoinositide metabolism. The sequence is that of 3'(2'),5'-bisphosphate nucleotidase 1 (Bpnt1) from Mus musculus (Mouse).